Reading from the N-terminus, the 695-residue chain is Centrosomal protein kizuna (695 aa).

The segment covering 1 to 12 (MPRGRGGGGGGL) has biased composition (gly residues). The segment at 1–24 (MPRGRGGGGGGLRQASATSAPLAS) is disordered. Over residues 15-24 (ASATSAPLAS) the composition is skewed to low complexity. Coiled coils occupy residues 29-57 (ERVGQLQQALRDSEKKRLDLEDKLYEYNK) and 102-132 (VEHLTTNTEKLQKLKTEYEAEVKRMRLLSKD). Disordered stretches follow at residues 261-313 (EIGS…SDRE), 351-391 (HSAW…SDLT), 444-465 (QSFPDSKREPSPDSPRQPEKVP), and 633-695 (SEAS…FYDT). Composition is skewed to polar residues over residues 263 to 274 (GSSTQHSKSNLS) and 282 to 297 (LHSSLQERLSPENSIT). Composition is skewed to basic and acidic residues over residues 299–313 (LKCDSSSRSEGSDRE) and 360–377 (DLDHGDSKSQKAVLKHEE). Low complexity predominate over residues 382-391 (GSSCSSSDLT). Residue T391 is modified to Phosphothreonine; by PLK1. Residues 448-465 (DSKREPSPDSPRQPEKVP) are compositionally biased toward basic and acidic residues. Residues 633–645 (SEASFSSSEGSPL) show a composition bias toward low complexity. A phosphoserine mark is found at S667, S670, and S672. The span at 676–686 (AALRPRDHDMP) shows a compositional bias: basic and acidic residues.

It belongs to the kizuna family. As to quaternary structure, interacts with AKAP9, CEP72, ODF2, PCNT and TUBGCP2. In terms of processing, phosphorylation at Thr-391 by PLK1 is not needed for centrosomal localization or pericentriolar material expansion but is indispensable for spindle-pole stabilization.

Its subcellular location is the cytoplasm. It is found in the cytoskeleton. It localises to the microtubule organizing center. The protein localises to the centrosome. The protein resides in the cilium basal body. In terms of biological role, centrosomal protein required for establishing a robust mitotic centrosome architecture that can endure the forces that converge on the centrosomes during spindle formation. Required for stabilizing the expanded pericentriolar material around the centriole. The protein is Centrosomal protein kizuna (Kiz) of Mus musculus (Mouse).